The primary structure comprises 225 residues: Urease accessory protein UreF (225 aa).

It belongs to the UreF family. UreD, UreF and UreG form a complex that acts as a GTP-hydrolysis-dependent molecular chaperone, activating the urease apoprotein by helping to assemble the nickel containing metallocenter of UreC. The UreE protein probably delivers the nickel.

The protein localises to the cytoplasm. Required for maturation of urease via the functional incorporation of the urease nickel metallocenter. The polypeptide is Urease accessory protein UreF (Picosynechococcus sp. (strain ATCC 27264 / PCC 7002 / PR-6) (Agmenellum quadruplicatum)).